The sequence spans 430 residues: Type II methyltransferase M.Sau96I (430 aa).

In terms of domain architecture, HTH cro/C1-type spans 9–63 (IEKMKNQNIKTQTELAEKIDISKSQLSFMFSDEYEPLKKNVIKLADVLKVSPNDI). Positions 99–429 (YNVFETFAGA…KSLVHYLNQF (331 aa)) constitute an SAM-dependent MTase C5-type domain. Cys174 is a catalytic residue.

This sequence belongs to the class I-like SAM-binding methyltransferase superfamily. C5-methyltransferase family.

It catalyses the reaction a 2'-deoxycytidine in DNA + S-adenosyl-L-methionine = a 5-methyl-2'-deoxycytidine in DNA + S-adenosyl-L-homocysteine + H(+). Its function is as follows. A methylase that recognizes the double-stranded sequence 5'-GGNCC-3', methylates C-4 on both strands, and protects the DNA from cleavage by the Sau96I endonuclease. In Staphylococcus aureus, this protein is Type II methyltransferase M.Sau96I.